The primary structure comprises 217 residues: Octanoyltransferase (217 aa).

The region spanning 34 to 216 (SETRDELWLL…AASRASRHDR (183 aa)) is the BPL/LPL catalytic domain. Substrate-binding positions include 73–80 (RGGQVTWH), 140–142 (ALG), and 153–155 (GLS). Cysteine 171 functions as the Acyl-thioester intermediate in the catalytic mechanism.

This sequence belongs to the LipB family.

Its subcellular location is the cytoplasm. The enzyme catalyses octanoyl-[ACP] + L-lysyl-[protein] = N(6)-octanoyl-L-lysyl-[protein] + holo-[ACP] + H(+). It functions in the pathway protein modification; protein lipoylation via endogenous pathway; protein N(6)-(lipoyl)lysine from octanoyl-[acyl-carrier-protein]: step 1/2. Catalyzes the transfer of endogenously produced octanoic acid from octanoyl-acyl-carrier-protein onto the lipoyl domains of lipoate-dependent enzymes. Lipoyl-ACP can also act as a substrate although octanoyl-ACP is likely to be the physiological substrate. The chain is Octanoyltransferase from Halorhodospira halophila (strain DSM 244 / SL1) (Ectothiorhodospira halophila (strain DSM 244 / SL1)).